We begin with the raw amino-acid sequence, 514 residues long: Bifunctional purine biosynthesis protein PurH (514 aa).

In terms of domain architecture, MGS-like spans 1 to 146 (MPPLALLSTS…KNFAHVTVLC (146 aa)).

The protein belongs to the PurH family.

It catalyses the reaction (6R)-10-formyltetrahydrofolate + 5-amino-1-(5-phospho-beta-D-ribosyl)imidazole-4-carboxamide = 5-formamido-1-(5-phospho-D-ribosyl)imidazole-4-carboxamide + (6S)-5,6,7,8-tetrahydrofolate. The catalysed reaction is IMP + H2O = 5-formamido-1-(5-phospho-D-ribosyl)imidazole-4-carboxamide. It participates in purine metabolism; IMP biosynthesis via de novo pathway; 5-formamido-1-(5-phospho-D-ribosyl)imidazole-4-carboxamide from 5-amino-1-(5-phospho-D-ribosyl)imidazole-4-carboxamide (10-formyl THF route): step 1/1. It functions in the pathway purine metabolism; IMP biosynthesis via de novo pathway; IMP from 5-formamido-1-(5-phospho-D-ribosyl)imidazole-4-carboxamide: step 1/1. The sequence is that of Bifunctional purine biosynthesis protein PurH from Cyanothece sp. (strain PCC 7425 / ATCC 29141).